A 276-amino-acid chain; its full sequence is Phosphatidylcholine synthase (276 aa).

The Cytoplasmic portion of the chain corresponds to 1–30 (MGGQKEMADSVKTKLTGKLKAKKVTAPQAK). Residues 31 to 51 (AFSVHLLTASGSFLAFLSVVA) traverse the membrane as a helical segment. Over 52-57 (ASDGRY) the chain is Periplasmic. A helical transmembrane segment spans residues 58–78 (TAMWWWLGLALFVDGIDGPIA). Residues 79 to 91 (RKLEVKYVLPNWS) are Cytoplasmic-facing. Residues 92–112 (GELLDSIIDYVTYVLIPAFAL) traverse the membrane as a helical segment. Residues 113 to 115 (YQS) lie on the Periplasmic side of the membrane. The chain crosses the membrane as a helical span at residues 116-136 (GFMGTNLSFISGAIIVVSSAI). The Cytoplasmic segment spans residues 137–146 (YYADTGMKTK). A helical membrane pass occupies residues 147–167 (ENFFKGFPVVWNMVVFTLFIV). Residues 168–171 (RPGE) are Periplasmic-facing. The chain crosses the membrane as a helical span at residues 172-192 (WVAFGTVVASAILSFLPINFL). Residues 193-202 (HPVRVVRLRP) lie on the Cytoplasmic side of the membrane. The helical transmembrane segment at 203–223 (LNLTIFLLWCAFGVIALYYML) threads the bilayer. Over 224-230 (DAPLWVR) the chain is Periplasmic. The helical transmembrane segment at 231–251 (IGISVTGLYIYFIGAIMQLFP) threads the bilayer. The Cytoplasmic segment spans residues 252–276 (SLGREAALAKARKLVEKQQKSGEAP).

The protein belongs to the CDP-alcohol phosphatidyltransferase class-I family. Mn(2+) serves as cofactor.

Its subcellular location is the cell inner membrane. The enzyme catalyses a CDP-1,2-diacyl-sn-glycerol + choline = a 1,2-diacyl-sn-glycero-3-phosphocholine + CMP + H(+). In terms of biological role, condenses choline with CDP-diglyceride to produce phosphatidylcholine and CMP. The polypeptide is Phosphatidylcholine synthase (Brucella melitensis biotype 1 (strain ATCC 23456 / CCUG 17765 / NCTC 10094 / 16M)).